The primary structure comprises 336 residues: MYYPFVRKALFQLDPERAHEFTFQQLRRITGTPFEALVRQKVPAKPVNCMGLTFKNPLGLAAGLDKDGECIDALGAMGFGSIEIGTVTPRPQPGNDKPRLFRLVDAEGLINRMGFNNLGVDNLVENVKKAHYDGVLGINIGKNKDTPVEQGKDDYLICMEKIYAYAGYIAINISSPNTPGLRTLQYGEALDDLLTAIKNKQNDLQVMHHKYVPIAVKIAPDLSEEELIQVADSLVRHNIDGVIATNTTLDRSLVQGMKNCDQTGGLSGRPLQLKSTEIIRRLSQELNGRLPIIGVGGIDSVIAAREKIAAGASLVQIYSGFIFKGPPLIKEIVTHI.

FMN-binding positions include 62 to 66 and T86; that span reads AGLDK. Residue K66 participates in substrate binding. 111–115 is a binding site for substrate; it reads NRMGF. FMN contacts are provided by N139 and N172. N172 is a substrate binding site. S175 functions as the Nucleophile in the catalytic mechanism. Residue N177 coordinates substrate. K217 and T245 together coordinate FMN. 246–247 is a binding site for substrate; that stretch reads NT. FMN is bound by residues G268, G297, and 318-319; that span reads YS.

This sequence belongs to the dihydroorotate dehydrogenase family. Type 2 subfamily. As to quaternary structure, monomer. FMN is required as a cofactor.

The protein localises to the cell membrane. It catalyses the reaction (S)-dihydroorotate + a quinone = orotate + a quinol. Its pathway is pyrimidine metabolism; UMP biosynthesis via de novo pathway; orotate from (S)-dihydroorotate (quinone route): step 1/1. Its function is as follows. Catalyzes the conversion of dihydroorotate to orotate with quinone as electron acceptor. This chain is Dihydroorotate dehydrogenase (quinone), found in Escherichia coli (strain UTI89 / UPEC).